Here is a 445-residue protein sequence, read N- to C-terminus: Probable fructoselysine/psicoselysine transporter FrlA (445 aa).

12 consecutive transmembrane segments (helical) span residues 10–30 (LGFW…GIFV), 38–58 (AAGT…IVIP), 93–113 (GWAS…LAIV), 121–141 (PIDP…FMLL), 155–175 (LITI…IFWF), 181–201 (AAPT…LAGI), 236–256 (CLLV…LMPF), 273–293 (IPAL…IVIL), 334–354 (IILQ…TSLL), 355–375 (GYFT…IIWC), 389–410 (AFGL…STFV), and 417–435 (LICA…AFWA).

Belongs to the amino acid-polyamine-organocation (APC) superfamily.

The protein resides in the cell inner membrane. The catalysed reaction is N(6)-(D-fructosyl)-L-lysine(in) = N(6)-(D-fructosyl)-L-lysine(out). It carries out the reaction N(6)-(D-psicosyl)-L-lysine(in) = N(6)-(D-psicosyl)-L-lysine(out). Its pathway is carbohydrate metabolism; fructoselysine degradation. Functionally, is likely involved in the transport of fructoselysine and psicoselysine to the cytoplasm, where they are degraded. The chain is Probable fructoselysine/psicoselysine transporter FrlA from Escherichia coli (strain K12).